Consider the following 280-residue polypeptide: S-methyl-5'-thioadenosine phosphorylase (280 aa).

Phosphate-binding positions include S15, 57–58 (RH), and 90–91 (TA). M193 is a substrate binding site. Residue T194 participates in phosphate binding. Residue 217-219 (DYD) participates in substrate binding.

This sequence belongs to the PNP/MTAP phosphorylase family. MTAP subfamily. In terms of assembly, homotrimer.

The protein resides in the cytoplasm. Its subcellular location is the nucleus. The catalysed reaction is S-methyl-5'-thioadenosine + phosphate = 5-(methylsulfanyl)-alpha-D-ribose 1-phosphate + adenine. It participates in amino-acid biosynthesis; L-methionine biosynthesis via salvage pathway; S-methyl-5-thio-alpha-D-ribose 1-phosphate from S-methyl-5'-thioadenosine (phosphorylase route): step 1/1. Its function is as follows. Catalyzes the reversible phosphorylation of S-methyl-5'-thioadenosine (MTA) to adenine and 5-methylthioribose-1-phosphate. Involved in the breakdown of MTA, a major by-product of polyamine biosynthesis. Responsible for the first step in the methionine salvage pathway after MTA has been generated from S-adenosylmethionine. Has broad substrate specificity with 6-aminopurine nucleosides as preferred substrates. In Danio rerio (Zebrafish), this protein is S-methyl-5'-thioadenosine phosphorylase (mtap).